A 200-amino-acid chain; its full sequence is Cytochrome c biogenesis ATP-binding export protein CcmA (200 aa).

Residues 2 to 200 (LDVIELDFDY…NKADYEEYHL (199 aa)) enclose the ABC transporter domain. 34–41 (GSNGAGKT) lines the ATP pocket.

This sequence belongs to the ABC transporter superfamily. CcmA exporter (TC 3.A.1.107) family. As to quaternary structure, the complex is composed of two ATP-binding proteins (CcmA) and two transmembrane proteins (CcmB).

It localises to the cell inner membrane. The enzyme catalyses heme b(in) + ATP + H2O = heme b(out) + ADP + phosphate + H(+). Part of the ABC transporter complex CcmAB involved in the biogenesis of c-type cytochromes; once thought to export heme, this seems not to be the case, but its exact role is uncertain. Responsible for energy coupling to the transport system. The polypeptide is Cytochrome c biogenesis ATP-binding export protein CcmA (Legionella pneumophila).